A 311-amino-acid chain; its full sequence is Avirulence protein ATR1 (311 aa).

A signal peptide spans 1-15 (MRVCYFVLVPSVALA). The short motif at 48 to 62 (RALRAQTALDDDEER) is the RxLR-dEER element. WY domain stretches follow at residues 127 to 209 (DEAL…VKCV) and 210 to 311 (ESED…IYSV).

Belongs to the RxLR effector family. Monomer. Interacts with defense protein RPP1 from several ecotypes including RPP1-NdA, RPP1-WsB, RPP1-EstA and RPP1-ZdrA, via their leucine-rich repeats (LLRs).

Its subcellular location is the secreted. The protein resides in the host cytoplasm. In terms of biological role, secreted effector that acts as an elicitor of hypersensitive response (HR) specifically on plants carrying both defense protein RPP1 from several ecotypes including RPP1-NdA, RPP1-WsB, RPP1-EstA and RPP1-ZdrA. The sequence is that of Avirulence protein ATR1 from Hyaloperonospora arabidopsidis (strain Emoy2) (Downy mildew agent).